We begin with the raw amino-acid sequence, 33 residues long: Photosystem II reaction center protein Psb30 (33 aa).

Residues 5–25 form a helical membrane-spanning segment; the sequence is ILSQLIAIAVTLFLGPVVVIL.

This sequence belongs to the Psb30/Ycf12 family. In terms of assembly, PSII is composed of 1 copy each of membrane proteins PsbA, PsbB, PsbC, PsbD, PsbE, PsbF, PsbH, PsbI, PsbJ, PsbK, PsbL, PsbM, PsbT, PsbX, PsbY, PsbZ, Psb30/Ycf12, peripheral proteins of the oxygen-evolving complex and a large number of cofactors. It forms dimeric complexes.

Its subcellular location is the plastid. It localises to the chloroplast thylakoid membrane. A core subunit of photosystem II (PSII), probably helps stabilize the reaction center. The polypeptide is Photosystem II reaction center protein Psb30 (Oedogonium cardiacum (Filamentous green alga)).